We begin with the raw amino-acid sequence, 65 residues long: Trypsin inhibitor 1 (65 aa).

Cystine bridges form between cysteine 39–cysteine 56, cysteine 46–cysteine 58, and cysteine 52–cysteine 64.

This sequence belongs to the protease inhibitor I7 (squash-type serine protease inhibitor) family.

It localises to the secreted. Inhibits trypsin. This chain is Trypsin inhibitor 1, found in Trichosanthes kirilowii (Chinese snake gourd).